Consider the following 416-residue polypeptide: 5-methylthioadenosine/S-adenosylhomocysteine deaminase 2 (416 aa).

Histidine 58 and histidine 60 together coordinate Zn(2+). Residues glutamate 86 and histidine 178 each coordinate substrate. Residue histidine 205 participates in Zn(2+) binding. Substrate contacts are provided by glutamate 208 and aspartate 293. Aspartate 293 is a binding site for Zn(2+).

Belongs to the metallo-dependent hydrolases superfamily. MTA/SAH deaminase family. Zn(2+) serves as cofactor.

It carries out the reaction S-adenosyl-L-homocysteine + H2O + H(+) = S-inosyl-L-homocysteine + NH4(+). It catalyses the reaction S-methyl-5'-thioadenosine + H2O + H(+) = S-methyl-5'-thioinosine + NH4(+). Catalyzes the deamination of 5-methylthioadenosine and S-adenosyl-L-homocysteine into 5-methylthioinosine and S-inosyl-L-homocysteine, respectively. Is also able to deaminate adenosine. In Archaeoglobus fulgidus (strain ATCC 49558 / DSM 4304 / JCM 9628 / NBRC 100126 / VC-16), this protein is 5-methylthioadenosine/S-adenosylhomocysteine deaminase 2.